The chain runs to 287 residues: NAD-dependent protein deacylase sir-2.2 (287 aa).

The Deacetylase sirtuin-type domain maps to 10 to 287; that stretch reads AELCENSLKK…YKISDVLKEM (278 aa). NAD(+) contacts are provided by residues 35–55 and 116–119; these read GAGI…VGLY and QNVD. His134 functions as the Proton acceptor in the catalytic mechanism. The Zn(2+) site is built by Cys142, Cys145, Cys196, and Cys199. NAD(+)-binding positions include 236 to 238, 262 to 264, and Ile280; these read GTS and NIG.

The protein belongs to the sirtuin family. Class II subfamily. In terms of assembly, interacts with pyc-1, pcca-1 and mccc-1. Zn(2+) is required as a cofactor. As to expression, ubiquitously expressed with high expression in the pharynx, body wall muscles and gonad.

The protein resides in the mitochondrion matrix. It is found in the mitochondrion. The catalysed reaction is N(6)-acetyl-L-lysyl-[protein] + NAD(+) + H2O = 2''-O-acetyl-ADP-D-ribose + nicotinamide + L-lysyl-[protein]. Its function is as follows. NAD-dependent protein deacylase. Catalyzes the NAD-dependent hydrolysis of acyl groups from lysine residues. Plays a role in oxidative stress resistance. The protein is NAD-dependent protein deacylase sir-2.2 (sir-2.2) of Caenorhabditis elegans.